The following is a 418-amino-acid chain: 3-isopropylmalate dehydratase large subunit 1 (418 aa).

[4Fe-4S] cluster-binding residues include Cys-298, Cys-358, and Cys-361.

The protein belongs to the aconitase/IPM isomerase family. LeuC type 2 subfamily. As to quaternary structure, heterodimer of LeuC and LeuD. [4Fe-4S] cluster is required as a cofactor.

It catalyses the reaction (2R,3S)-3-isopropylmalate = (2S)-2-isopropylmalate. It functions in the pathway amino-acid biosynthesis; L-leucine biosynthesis; L-leucine from 3-methyl-2-oxobutanoate: step 2/4. In terms of biological role, catalyzes the isomerization between 2-isopropylmalate and 3-isopropylmalate, via the formation of 2-isopropylmaleate. The sequence is that of 3-isopropylmalate dehydratase large subunit 1 from Methanopyrus kandleri (strain AV19 / DSM 6324 / JCM 9639 / NBRC 100938).